The primary structure comprises 218 residues: Adenylate kinase (218 aa).

10-15 (GAGKGT) lines the ATP pocket. The NMP stretch occupies residues 30-59 (STGDMFRAAMANQTEMGRLAKSFIDKGELV). AMP contacts are provided by residues Thr-31, Arg-36, 57–59 (ELV), 86–89 (GYPR), and Gln-93. The segment at 127–165 (GRFICRSCGSTYHKVFNPTKVEGTCDVCGGHEFFQREDD) is LID. Arg-128 contributes to the ATP binding site. Zn(2+) is bound by residues Cys-131 and Cys-134. Residue 137 to 138 (TY) coordinates ATP. Zn(2+) contacts are provided by Cys-151 and Cys-154. Residues Arg-162 and Arg-173 each contribute to the AMP site. Gln-201 is an ATP binding site.

The protein belongs to the adenylate kinase family. Monomer.

The protein resides in the cytoplasm. It catalyses the reaction AMP + ATP = 2 ADP. It functions in the pathway purine metabolism; AMP biosynthesis via salvage pathway; AMP from ADP: step 1/1. Functionally, catalyzes the reversible transfer of the terminal phosphate group between ATP and AMP. Plays an important role in cellular energy homeostasis and in adenine nucleotide metabolism. The protein is Adenylate kinase of Streptococcus thermophilus (strain CNRZ 1066).